The primary structure comprises 409 residues: Tyrosine--tRNA ligase (409 aa).

The short motif at 54–63 (PTAPDIHLGH) is the 'HIGH' region element. Residues 238-242 (KMSKS) carry the 'KMSKS' region motif. An ATP-binding site is contributed by lysine 241. The region spanning 347-407 (QGILRILREA…GKRKFARVKL (61 aa)) is the S4 RNA-binding domain.

Belongs to the class-I aminoacyl-tRNA synthetase family. TyrS type 2 subfamily. In terms of assembly, homodimer.

It localises to the cytoplasm. The enzyme catalyses tRNA(Tyr) + L-tyrosine + ATP = L-tyrosyl-tRNA(Tyr) + AMP + diphosphate + H(+). In terms of biological role, catalyzes the attachment of tyrosine to tRNA(Tyr) in a two-step reaction: tyrosine is first activated by ATP to form Tyr-AMP and then transferred to the acceptor end of tRNA(Tyr). This chain is Tyrosine--tRNA ligase, found in Bordetella bronchiseptica (strain ATCC BAA-588 / NCTC 13252 / RB50) (Alcaligenes bronchisepticus).